The sequence spans 324 residues: Glyoxylate/hydroxypyruvate reductase B (324 aa).

Residues arginine 237 and glutamate 266 contribute to the active site. The active-site Proton donor is histidine 285.

This sequence belongs to the D-isomer specific 2-hydroxyacid dehydrogenase family. GhrB subfamily. In terms of assembly, homodimer.

The protein resides in the cytoplasm. It catalyses the reaction glycolate + NADP(+) = glyoxylate + NADPH + H(+). The enzyme catalyses (R)-glycerate + NAD(+) = 3-hydroxypyruvate + NADH + H(+). It carries out the reaction (R)-glycerate + NADP(+) = 3-hydroxypyruvate + NADPH + H(+). Catalyzes the NADPH-dependent reduction of glyoxylate and hydroxypyruvate into glycolate and glycerate, respectively. The sequence is that of Glyoxylate/hydroxypyruvate reductase B from Citrobacter koseri (strain ATCC BAA-895 / CDC 4225-83 / SGSC4696).